We begin with the raw amino-acid sequence, 181 residues long: Large ribosomal subunit protein uL6 (181 aa).

It belongs to the universal ribosomal protein uL6 family. In terms of assembly, part of the 50S ribosomal subunit.

Functionally, this protein binds to the 23S rRNA, and is important in its secondary structure. It is located near the subunit interface in the base of the L7/L12 stalk, and near the tRNA binding site of the peptidyltransferase center. This is Large ribosomal subunit protein uL6 from Synechococcus sp. (strain JA-2-3B'a(2-13)) (Cyanobacteria bacterium Yellowstone B-Prime).